Reading from the N-terminus, the 481-residue chain is tRNA-2-methylthio-N(6)-dimethylallyladenosine synthase (481 aa).

The MTTase N-terminal domain occupies 24–140 (KKLFIESYGC…LPNLLAEVEE (117 aa)). Cysteine 33, cysteine 69, cysteine 103, cysteine 178, cysteine 182, and cysteine 185 together coordinate [4Fe-4S] cluster. Positions 164–411 (MSNGITALVS…DLQQKHAWFR (248 aa)) constitute a Radical SAM core domain. Residues 413-476 (EEFVGKTVEV…SGTLKGEAVG (64 aa)) form the TRAM domain.

The protein belongs to the methylthiotransferase family. MiaB subfamily. Monomer. The cofactor is [4Fe-4S] cluster.

Its subcellular location is the cytoplasm. It catalyses the reaction N(6)-dimethylallyladenosine(37) in tRNA + (sulfur carrier)-SH + AH2 + 2 S-adenosyl-L-methionine = 2-methylsulfanyl-N(6)-dimethylallyladenosine(37) in tRNA + (sulfur carrier)-H + 5'-deoxyadenosine + L-methionine + A + S-adenosyl-L-homocysteine + 2 H(+). Its function is as follows. Catalyzes the methylthiolation of N6-(dimethylallyl)adenosine (i(6)A), leading to the formation of 2-methylthio-N6-(dimethylallyl)adenosine (ms(2)i(6)A) at position 37 in tRNAs that read codons beginning with uridine. In Flavobacterium johnsoniae (strain ATCC 17061 / DSM 2064 / JCM 8514 / BCRC 14874 / CCUG 350202 / NBRC 14942 / NCIMB 11054 / UW101) (Cytophaga johnsonae), this protein is tRNA-2-methylthio-N(6)-dimethylallyladenosine synthase.